The sequence spans 319 residues: MDVMTLATIPSPPQGVWYLGPIPIRAYAMCIIAGIIVAIWLTRKRYAARGGNPEIVLDAAIVAVPAGIIGGRIYHVITDNQKYFCDTCNPVDAFKITNGGLGIWGAVILGGLAVAVFFRYKKLPLAPFADAVAPAVILAQGIGRLGNWFNQELYGAETTVPWALEIYYRVDENGKFAPVTGTSTGEVMATVHPTFLYELLWNLLIFALLMWADKRFKLGHGRVFALYVAGYTLGRFWIEQMRVDEATLIGGIRINTIVSAVVFAGAIIVFFLLKKGRETPEEVDPTFAASVAADAVASPDGKPLPKAGEGIDGETPSTR.

The next 3 membrane-spanning stretches (helical) occupy residues 21 to 41, 50 to 70, and 98 to 118; these read PIPIRAYAMCIIAGIIVAIWL, GGNPEIVLDAAIVAVPAGIIG, and NGGLGIWGAVILGGLAVAVFF. A 1,2-diacyl-sn-glycero-3-phospho-(1'-sn-glycerol) is bound at residue Arg144. 2 consecutive transmembrane segments (helical) span residues 191-211 and 254-274; these read VHPTFLYELLWNLLIFALLMW and INTIVSAVVFAGAIIVFFLLK. Positions 295-319 are disordered; sequence AVASPDGKPLPKAGEGIDGETPSTR.

It belongs to the Lgt family.

The protein resides in the cell membrane. It catalyses the reaction L-cysteinyl-[prolipoprotein] + a 1,2-diacyl-sn-glycero-3-phospho-(1'-sn-glycerol) = an S-1,2-diacyl-sn-glyceryl-L-cysteinyl-[prolipoprotein] + sn-glycerol 1-phosphate + H(+). Its pathway is protein modification; lipoprotein biosynthesis (diacylglyceryl transfer). Its function is as follows. Catalyzes the transfer of the diacylglyceryl group from phosphatidylglycerol to the sulfhydryl group of the N-terminal cysteine of a prolipoprotein, the first step in the formation of mature lipoproteins. In Corynebacterium glutamicum (strain R), this protein is Phosphatidylglycerol--prolipoprotein diacylglyceryl transferase.